A 304-amino-acid polypeptide reads, in one-letter code: Large ribosomal subunit protein uL2m (304 aa).

The transit peptide at 1-60 directs the protein to the mitochondrion; sequence MALCALASALRSLSLASPAITARVPTLLPVGQSNVLLQLPSALALPAHRPVHMSADRSAK.

It belongs to the universal ribosomal protein uL2 family. As to quaternary structure, component of the mitochondrial ribosome large subunit (39S) which comprises a 16S rRNA and about 50 distinct proteins.

It localises to the mitochondrion. In Rattus norvegicus (Rat), this protein is Large ribosomal subunit protein uL2m (Mrpl2).